A 365-amino-acid chain; its full sequence is N-acetylgalactosamine-N,N'-diacetylbacillosaminyl-diphospho-undecaprenol 4-alpha-N-acetylgalactosaminyltransferase (365 aa).

The protein belongs to the glycosyltransferase group 1 family.

It localises to the cell inner membrane. It catalyses the reaction N-acetyl-alpha-D-galactosaminyl-(1-&gt;3)-N,N'-diacetyl-alpha-D-bacillosaminyl-tri-trans,hepta-cis-undecaprenyl diphosphate + UDP-N-acetyl-alpha-D-galactosamine = N-acetyl-alpha-D-galactosaminyl-(1-&gt;4)-N-acetyl-alpha-D-galactosaminyl-(1-&gt;3)-N,N'-diacetyl-alpha-D-bacillosaminyl-tri-trans,heptacis-undecaprenyl diphosphate + UDP + H(+). The protein operates within protein modification; protein glycosylation. Adds a GalNAc residue on to the Und-PP-Bac2,4diNAc-GalNAc disaccharide in the N-linked protein glycosylation pathway. Transfers the third sugar in the heptasaccharide biosynthesis. The polypeptide is N-acetylgalactosamine-N,N'-diacetylbacillosaminyl-diphospho-undecaprenol 4-alpha-N-acetylgalactosaminyltransferase (pglJ) (Campylobacter jejuni subsp. jejuni serotype O:2 (strain ATCC 700819 / NCTC 11168)).